A 608-amino-acid polypeptide reads, in one-letter code: UvrABC system protein C (608 aa).

The region spanning 18–96 (NQPGVYRMYN…IKKYKPRYNV (79 aa)) is the GIY-YIG domain. The 36-residue stretch at 206–241 (KQVIDSLVQHMERASTDLRFEAAARYRDQISALNKV) folds into the UVR domain.

This sequence belongs to the UvrC family. In terms of assembly, interacts with UvrB in an incision complex.

It localises to the cytoplasm. The UvrABC repair system catalyzes the recognition and processing of DNA lesions. UvrC both incises the 5' and 3' sides of the lesion. The N-terminal half is responsible for the 3' incision and the C-terminal half is responsible for the 5' incision. In Pseudoalteromonas atlantica (strain T6c / ATCC BAA-1087), this protein is UvrABC system protein C.